A 329-amino-acid polypeptide reads, in one-letter code: Putative methylthioribose-1-phosphate isomerase (329 aa).

Residues 50–52 (RGA), Arg-84, and Gln-182 contribute to the substrate site. Asp-223 serves as the catalytic Proton donor. 233–234 (NK) lines the substrate pocket.

The protein belongs to the eIF-2B alpha/beta/delta subunits family. MtnA subfamily.

The catalysed reaction is 5-(methylsulfanyl)-alpha-D-ribose 1-phosphate = 5-(methylsulfanyl)-D-ribulose 1-phosphate. Catalyzes the interconversion of methylthioribose-1-phosphate (MTR-1-P) into methylthioribulose-1-phosphate (MTRu-1-P). This chain is Putative methylthioribose-1-phosphate isomerase, found in Methanocaldococcus jannaschii (strain ATCC 43067 / DSM 2661 / JAL-1 / JCM 10045 / NBRC 100440) (Methanococcus jannaschii).